Reading from the N-terminus, the 156-residue chain is Arginine repressor (156 aa).

It belongs to the ArgR family.

It localises to the cytoplasm. Its pathway is amino-acid biosynthesis; L-arginine biosynthesis [regulation]. Its function is as follows. Regulates arginine biosynthesis genes. This Shewanella pealeana (strain ATCC 700345 / ANG-SQ1) protein is Arginine repressor.